The sequence spans 319 residues: Protein sprouty homolog 1 (319 aa).

N-acetylmethionine is present on Met-1. The segment at 54–160 (TEGPSVVKRP…ERAIRTQPKQ (107 aa)) is disordered. Over residues 69 to 79 (PRQEKHERTHE) the composition is skewed to basic and acidic residues. Residues 112–131 (SRSTSTGSAASSGSNSSASS) show a composition bias toward low complexity. In terms of domain architecture, SPR spans 183–295 (QCGKCKCGEC…CYDWIHRPGC (113 aa)).

This sequence belongs to the sprouty family. Forms heterodimers with SPRY2. Interacts with TESK1. Interacts with CAV1 (via C-terminus).

It is found in the cytoplasm. Its subcellular location is the membrane. Its function is as follows. Inhibits fibroblast growth factor (FGF)-induced retinal lens fiber differentiation, probably by inhibiting FGF-mediated phosphorylation of ERK1/2. Inhibits TGFB-induced epithelial-to-mesenchymal transition in lens epithelial cells. The sequence is that of Protein sprouty homolog 1 (SPRY1) from Cervus elaphus (Red deer).